We begin with the raw amino-acid sequence, 197 residues long: dITP/XTP pyrophosphatase (197 aa).

8–13 (TGNPGK) contributes to the substrate binding site. The Mg(2+) site is built by Glu-40 and Asp-69. Asp-69 (proton acceptor) is an active-site residue. Substrate-binding positions include Ser-70, 154 to 157 (FGYD), Lys-177, and 182 to 183 (HR).

This sequence belongs to the HAM1 NTPase family. Homodimer. Requires Mg(2+) as cofactor.

It carries out the reaction XTP + H2O = XMP + diphosphate + H(+). The catalysed reaction is dITP + H2O = dIMP + diphosphate + H(+). It catalyses the reaction ITP + H2O = IMP + diphosphate + H(+). In terms of biological role, pyrophosphatase that catalyzes the hydrolysis of nucleoside triphosphates to their monophosphate derivatives, with a high preference for the non-canonical purine nucleotides XTP (xanthosine triphosphate), dITP (deoxyinosine triphosphate) and ITP. Seems to function as a house-cleaning enzyme that removes non-canonical purine nucleotides from the nucleotide pool, thus preventing their incorporation into DNA/RNA and avoiding chromosomal lesions. This Photorhabdus laumondii subsp. laumondii (strain DSM 15139 / CIP 105565 / TT01) (Photorhabdus luminescens subsp. laumondii) protein is dITP/XTP pyrophosphatase.